The following is a 261-amino-acid chain: Cytochrome c oxidase subunit 3 (261 aa).

At 2–15 (THQTHAYHMVNPSP) the chain is on the mitochondrial matrix side. A helical transmembrane segment spans residues 16–34 (WPLTGALSALLLTSGLVMW). The Mitochondrial intermembrane segment spans residues 35-40 (FHYNST). A helical membrane pass occupies residues 41–66 (ILLSLGLLTNILTMYQWWRDIIREGT). Topologically, residues 67-72 (YQGHHT) are mitochondrial matrix. The chain crosses the membrane as a helical span at residues 73 to 105 (PIVQKGLRYGMILFIVSEVFFFAGFFWAFYHSS). Residues 106–128 (LVPTHDLGGCWPPTGITPLNPLE) lie on the Mitochondrial intermembrane side of the membrane. A helical transmembrane segment spans residues 129 to 152 (VPLLNTSVLLASGVSITWAHHSLM). Over 153-155 (EGN) the chain is Mitochondrial matrix. A helical membrane pass occupies residues 156–183 (RNHMNQALLITILLGLYFTILQASEYFE). The Mitochondrial intermembrane segment spans residues 184 to 190 (TSFSISD). Residues 191-223 (GIYGSTFFMATGFHGLHVIIGSTFLIVCLLRQL) traverse the membrane as a helical segment. The Mitochondrial matrix portion of the chain corresponds to 224 to 232 (KFHFTSKHH). The helical transmembrane segment at 233-256 (FGFEAAAWYWHFVDVVWLFLYVSI) threads the bilayer. At 257-261 (YWWGS) the chain is on the mitochondrial intermembrane side.

It belongs to the cytochrome c oxidase subunit 3 family. In terms of assembly, component of the cytochrome c oxidase (complex IV, CIV), a multisubunit enzyme composed of 14 subunits. The complex is composed of a catalytic core of 3 subunits MT-CO1, MT-CO2 and MT-CO3, encoded in the mitochondrial DNA, and 11 supernumerary subunits COX4I, COX5A, COX5B, COX6A, COX6B, COX6C, COX7A, COX7B, COX7C, COX8 and NDUFA4, which are encoded in the nuclear genome. The complex exists as a monomer or a dimer and forms supercomplexes (SCs) in the inner mitochondrial membrane with NADH-ubiquinone oxidoreductase (complex I, CI) and ubiquinol-cytochrome c oxidoreductase (cytochrome b-c1 complex, complex III, CIII), resulting in different assemblies (supercomplex SCI(1)III(2)IV(1) and megacomplex MCI(2)III(2)IV(2)).

Its subcellular location is the mitochondrion inner membrane. It carries out the reaction 4 Fe(II)-[cytochrome c] + O2 + 8 H(+)(in) = 4 Fe(III)-[cytochrome c] + 2 H2O + 4 H(+)(out). Functionally, component of the cytochrome c oxidase, the last enzyme in the mitochondrial electron transport chain which drives oxidative phosphorylation. The respiratory chain contains 3 multisubunit complexes succinate dehydrogenase (complex II, CII), ubiquinol-cytochrome c oxidoreductase (cytochrome b-c1 complex, complex III, CIII) and cytochrome c oxidase (complex IV, CIV), that cooperate to transfer electrons derived from NADH and succinate to molecular oxygen, creating an electrochemical gradient over the inner membrane that drives transmembrane transport and the ATP synthase. Cytochrome c oxidase is the component of the respiratory chain that catalyzes the reduction of oxygen to water. Electrons originating from reduced cytochrome c in the intermembrane space (IMS) are transferred via the dinuclear copper A center (CU(A)) of subunit 2 and heme A of subunit 1 to the active site in subunit 1, a binuclear center (BNC) formed by heme A3 and copper B (CU(B)). The BNC reduces molecular oxygen to 2 water molecules using 4 electrons from cytochrome c in the IMS and 4 protons from the mitochondrial matrix. This is Cytochrome c oxidase subunit 3 from Rattus norvegicus (Rat).